The following is a 582-amino-acid chain: Proline--tRNA ligase (582 aa).

Belongs to the class-II aminoacyl-tRNA synthetase family. ProS type 1 subfamily. Homodimer.

The protein localises to the cytoplasm. It carries out the reaction tRNA(Pro) + L-proline + ATP = L-prolyl-tRNA(Pro) + AMP + diphosphate. Catalyzes the attachment of proline to tRNA(Pro) in a two-step reaction: proline is first activated by ATP to form Pro-AMP and then transferred to the acceptor end of tRNA(Pro). As ProRS can inadvertently accommodate and process non-cognate amino acids such as alanine and cysteine, to avoid such errors it has two additional distinct editing activities against alanine. One activity is designated as 'pretransfer' editing and involves the tRNA(Pro)-independent hydrolysis of activated Ala-AMP. The other activity is designated 'posttransfer' editing and involves deacylation of mischarged Ala-tRNA(Pro). The misacylated Cys-tRNA(Pro) is not edited by ProRS. This is Proline--tRNA ligase from Mycobacterium bovis (strain ATCC BAA-935 / AF2122/97).